A 110-amino-acid polypeptide reads, in one-letter code: uncharacterized protein (110 aa).

The N-terminal stretch at 1-23 (MKRITINIITMFIAAAVISLTGT) is a signal peptide.

This is an uncharacterized protein from Bacillus subtilis (strain 168).